The chain runs to 1411 residues: Early endosome antigen 1 (1411 aa).

The segment at 1–27 is disordered; it reads MLRRILQRTPGRVGSQGSDLDSSATPI. Positions 15 to 27 are enriched in polar residues; the sequence is SQGSDLDSSATPI. The segment at 41-64 adopts a C2H2-type zinc-finger fold; the sequence is FICPQCMKSLGSADELFKHYEAVH. 2 positions are modified to phosphoserine: S52 and S70. A coiled-coil region spans residues 74 to 1348; the sequence is GESNLALKRD…IKHTQALNRK (1275 aa). A disordered region spans residues 473–501; that stretch reads VTNSTELQHQLDKTKQQHQEQQALQQSTT. Residues 481–490 show a composition bias toward basic and acidic residues; the sequence is HQLDKTKQQH. The FYVE-type zinc-finger motif lies at 1352 to 1410; it reads DNEVQNCMACGKGFSVTVRRHHCRQCGNIFCAECSAKNALTPSSKKPVRVCDACFNDLQ. Zn(2+) is bound by residues C1358, C1361, C1374, C1377, C1382, C1385, C1402, and C1405.

In terms of assembly, homodimer. Binds STX6. Binds RAB5A, RAB5B, RAB5C and RAB22A that have been activated by GTP-binding. Interacts with RAB31. Interacts with ERBB2. Interacts with SAMD9 and SAMD9L. May interact with PLEKHF2.

It is found in the cytoplasm. Its subcellular location is the early endosome membrane. Functionally, binds phospholipid vesicles containing phosphatidylinositol 3-phosphate and participates in endosomal trafficking. The protein is Early endosome antigen 1 (EEA1) of Homo sapiens (Human).